The sequence spans 57 residues: Protein GnsB (57 aa).

Belongs to the gns family.

Functionally, overexpression increases levels of unsaturated fatty acids and suppresses both the temperature-sensitive fabA6 mutation and cold-sensitive secG null mutation. The polypeptide is Protein GnsB (gnsB) (Escherichia coli (strain K12)).